The chain runs to 218 residues: Elongation factor Ts (218 aa).

The interval 82–85 (TDFV) is involved in Mg(2+) ion dislocation from EF-Tu.

It belongs to the EF-Ts family.

Its subcellular location is the cytoplasm. Its function is as follows. Associates with the EF-Tu.GDP complex and induces the exchange of GDP to GTP. It remains bound to the aminoacyl-tRNA.EF-Tu.GTP complex up to the GTP hydrolysis stage on the ribosome. The chain is Elongation factor Ts from Prochlorococcus marinus (strain MIT 9303).